A 300-amino-acid chain; its full sequence is Probable lipid kinase YegS-like (300 aa).

One can recognise a DAGKc domain in the interval 1-129 (MSKKALLILH…CDVIRVNNHY (129 aa)). ATP contacts are provided by residues threonine 38, 64–70 (GDGSVRD), and threonine 92. Residues leucine 210, aspartate 213, and leucine 215 each contribute to the Mg(2+) site. Glutamate 272 (proton acceptor) is an active-site residue.

Belongs to the diacylglycerol/lipid kinase family. YegS lipid kinase subfamily. Mg(2+) serves as cofactor. Requires Ca(2+) as cofactor.

The protein localises to the cytoplasm. Its function is as follows. Probably phosphorylates lipids; the in vivo substrate is unknown. In Alcanivorax borkumensis (strain ATCC 700651 / DSM 11573 / NCIMB 13689 / SK2), this protein is Probable lipid kinase YegS-like.